Here is a 102-residue protein sequence, read N- to C-terminus: Large ribosomal subunit protein bL21 (102 aa).

It belongs to the bacterial ribosomal protein bL21 family. Part of the 50S ribosomal subunit. Contacts protein L20.

In terms of biological role, this protein binds to 23S rRNA in the presence of protein L20. The chain is Large ribosomal subunit protein bL21 from Oceanobacillus iheyensis (strain DSM 14371 / CIP 107618 / JCM 11309 / KCTC 3954 / HTE831).